A 100-amino-acid chain; its full sequence is Urease subunit gamma (100 aa).

Belongs to the urease gamma subunit family. Heterotrimer of UreA (gamma), UreB (beta) and UreC (alpha) subunits. Three heterotrimers associate to form the active enzyme.

The protein resides in the cytoplasm. The catalysed reaction is urea + 2 H2O + H(+) = hydrogencarbonate + 2 NH4(+). It participates in nitrogen metabolism; urea degradation; CO(2) and NH(3) from urea (urease route): step 1/1. The protein is Urease subunit gamma of Jannaschia sp. (strain CCS1).